The chain runs to 250 residues: Heat stress transcription factor C-1b (250 aa).

A coiled-coil region spans residues 129 to 182 (EEGEEVRGTIEAVQRLREEQRGMEEELQAMDQRLRAAESRPGQMMAFLAKLADE). Residues 144 to 180 (LREEQRGMEEELQAMDQRLRAAESRPGQMMAFLAKLA) are hydrophobic repeat HR-A/B. The tract at residues 199-226 (AAGNNGSDPCKRRRIGADTGRGGVATGG) is disordered. Positions 209-212 (KRRR) match the Nuclear localization signal motif.

The protein belongs to the HSF family. Class C subfamily. In terms of assembly, homotrimer. Exhibits temperature-dependent phosphorylation.

The protein resides in the nucleus. Its function is as follows. Transcriptional regulator that specifically binds DNA of heat shock promoter elements (HSE). This Oryza sativa subsp. japonica (Rice) protein is Heat stress transcription factor C-1b (HSFC1B).